Here is a 282-residue protein sequence, read N- to C-terminus: uncharacterized protein (282 aa).

Tyr-50 (proton donor) is an active-site residue. His-115 contacts substrate.

This sequence belongs to the aldo/keto reductase family.

This is an uncharacterized protein from Saccharomyces cerevisiae (strain ATCC 204508 / S288c) (Baker's yeast).